A 336-amino-acid chain; its full sequence is G patch domain and ankyrin repeat-containing protein 1 homolog (336 aa).

ANK repeat units lie at residues 123–152 (FGWT…QVET) and 156–185 (SGNT…LEET). Residues 240–286 (AKNRGLQLMVKQGWDQEHGLGPSQSGRLYPVKTVLRKQRTGLGIEQQ) form the G-patch domain.

The protein is G patch domain and ankyrin repeat-containing protein 1 homolog of Drosophila melanogaster (Fruit fly).